The following is a 315-amino-acid chain: Ribosomal RNA small subunit methyltransferase H (315 aa).

S-adenosyl-L-methionine is bound by residues 37–39 (GGH), aspartate 57, phenylalanine 83, aspartate 105, and glutamine 112.

This sequence belongs to the methyltransferase superfamily. RsmH family.

The protein resides in the cytoplasm. It catalyses the reaction cytidine(1402) in 16S rRNA + S-adenosyl-L-methionine = N(4)-methylcytidine(1402) in 16S rRNA + S-adenosyl-L-homocysteine + H(+). Functionally, specifically methylates the N4 position of cytidine in position 1402 (C1402) of 16S rRNA. This Pseudomonas putida (strain ATCC 700007 / DSM 6899 / JCM 31910 / BCRC 17059 / LMG 24140 / F1) protein is Ribosomal RNA small subunit methyltransferase H.